An 840-amino-acid polypeptide reads, in one-letter code: Translation initiation factor IF-2 (840 aa).

Residues 1 to 251 form a disordered region; the sequence is MTEEKKFSSS…GPAVPATERK (251 aa). 2 stretches are compositionally biased toward polar residues: residues 38–50 and 65–83; these read DGTN…TPRS and NRHT…ASRP. The span at 84-102 shows a compositional bias: low complexity; the sequence is NQSKSQGQGGRNNQRPGSR. 2 stretches are compositionally biased toward basic and acidic residues: residues 110 to 135 and 158 to 168; these read PMIR…KTDN and KPAEQSKKAAE. Residues 169-207 are compositionally biased toward low complexity; the sequence is KPAQTKPKTAETKTTATTTQSGTGKFGGALASGNNSARN. The span at 230–239 shows a compositional bias: basic residues; that stretch reads GSKKSRRIAA. The 170-residue stretch at 341 to 510 folds into the tr-type G domain; sequence ARPPVVTIMG…LLQAEVLELK (170 aa). Residues 350–357 form a G1 region; the sequence is GHVDHGKT. 350 to 357 provides a ligand contact to GTP; that stretch reads GHVDHGKT. Residues 375–379 are G2; the sequence is GITQH. A G3 region spans residues 396 to 399; that stretch reads DTPG. GTP contacts are provided by residues 396 to 400 and 450 to 453; these read DTPGH and NKID. Residues 450-453 form a G4 region; the sequence is NKID. The G5 stretch occupies residues 486–488; it reads SAK.

Belongs to the TRAFAC class translation factor GTPase superfamily. Classic translation factor GTPase family. IF-2 subfamily.

The protein localises to the cytoplasm. Functionally, one of the essential components for the initiation of protein synthesis. Protects formylmethionyl-tRNA from spontaneous hydrolysis and promotes its binding to the 30S ribosomal subunits. Also involved in the hydrolysis of GTP during the formation of the 70S ribosomal complex. The polypeptide is Translation initiation factor IF-2 (Leuconostoc citreum (strain KM20)).